Here is a 143-residue protein sequence, read N- to C-terminus: Endoribonuclease YbeY (143 aa).

Residues His109, His113, and His119 each contribute to the Zn(2+) site.

It belongs to the endoribonuclease YbeY family. Zn(2+) serves as cofactor.

It is found in the cytoplasm. Its function is as follows. Single strand-specific metallo-endoribonuclease involved in late-stage 70S ribosome quality control and in maturation of the 3' terminus of the 16S rRNA. The chain is Endoribonuclease YbeY from Leptospira borgpetersenii serovar Hardjo-bovis (strain JB197).